Here is a 318-residue protein sequence, read N- to C-terminus: MTAPHTAPARVAVLGGTGFIGRVLGARLLAQGAEVLSLARKAPAEPAPGRFVAFDLSNGDPAELTALLDRERIDTVVNAAGGMWGLNDEQMYQANVVLTERLIEAVAAMASPARLVHLGTVHEYGMAPVGTSQRESDPAAPVMEYGKLKLAATEAVVRAVEAGRISGVVLRLGNVVGAGQPGHSLLGVMAAKLDAARAAGETAQLSLQPLTALRDFVDLTDTLDAVLLAAADRSAPPVVNVGTGSASTARHLVELLIEESGVPTEITEVPAPDGTGPETEWQQLDVTVARDSLGWTPRRTLREAVRELWTAQSTAPVA.

NAD(+) is bound by residues 19–20, 60–61, N95, T120, Y145, and K149; these read FI and DP. Residues T120 and Y145 each coordinate substrate. The active-site Proton acceptor is the Y145.

It belongs to the NAD(P)-dependent epimerase/dehydratase family.

It carries out the reaction dTDP-6-deoxy-beta-L-talose + NAD(+) = dTDP-4-dehydro-beta-L-rhamnose + NADH + H(+). The enzyme catalyses dTDP-6-deoxy-beta-L-talose + NADP(+) = dTDP-4-dehydro-beta-L-rhamnose + NADPH + H(+). Its function is as follows. Catalyzes the reduction of dTDP-6-deoxy-L-lyxo-4-hexulose to dTDP-6-deoxy-L-talose. Can use NAD(+) or NADP(+). The sequence is that of dTDP-6-deoxy-L-talose 4-dehydrogenase (NAD(P)(+)) (tal) from Kitasatospora kifunensis (Streptomyces kifunensis).